Consider the following 182-residue polypeptide: Large ribosomal subunit protein bL17 (182 aa).

Positions 126–182 (ERANRVAASKAKKAEAEAAEAKAEEAEEAPEVEADTATDKAAEAEAAEAADEAAEDK) are disordered. The segment covering 137 to 149 (KKAEAEAAEAKAE) has biased composition (basic and acidic residues). Acidic residues-rich tracts occupy residues 150 to 161 (EAEEAPEVEADT) and 170 to 182 (EAAEAADEAAEDK).

This sequence belongs to the bacterial ribosomal protein bL17 family. Part of the 50S ribosomal subunit. Contacts protein L32.

This is Large ribosomal subunit protein bL17 from Corynebacterium jeikeium (strain K411).